Here is a 76-residue protein sequence, read N- to C-terminus: Omega-conotoxin-like TxO1 (76 aa).

The N-terminal stretch at 1-22 (MKLTCVVIVAVLFLTVWTFATA) is a signal peptide. A propeptide spanning residues 23 to 50 (DDSGNGLEKLFSNAHHEMKNPEASKLNE) is cleaved from the precursor. 3 disulfide bridges follow: cysteine 52/cysteine 67, cysteine 59/cysteine 70, and cysteine 66/cysteine 75.

The protein belongs to the conotoxin O1 superfamily. In terms of tissue distribution, expressed by the venom duct.

The protein localises to the secreted. Omega-conotoxins act at presynaptic membranes, they bind and block voltage-gated calcium channels (Cav). The chain is Omega-conotoxin-like TxO1 from Conus textile (Cloth-of-gold cone).